Here is a 321-residue protein sequence, read N- to C-terminus: Lipoyl synthase (321 aa).

7 residues coordinate [4Fe-4S] cluster: Cys-68, Cys-73, Cys-79, Cys-94, Cys-98, Cys-101, and Ser-308. The 218-residue stretch at 80–297 folds into the Radical SAM core domain; that stretch reads FNHGTATFMI…KEIALELGFT (218 aa).

Belongs to the radical SAM superfamily. Lipoyl synthase family. It depends on [4Fe-4S] cluster as a cofactor.

It localises to the cytoplasm. The catalysed reaction is [[Fe-S] cluster scaffold protein carrying a second [4Fe-4S](2+) cluster] + N(6)-octanoyl-L-lysyl-[protein] + 2 oxidized [2Fe-2S]-[ferredoxin] + 2 S-adenosyl-L-methionine + 4 H(+) = [[Fe-S] cluster scaffold protein] + N(6)-[(R)-dihydrolipoyl]-L-lysyl-[protein] + 4 Fe(3+) + 2 hydrogen sulfide + 2 5'-deoxyadenosine + 2 L-methionine + 2 reduced [2Fe-2S]-[ferredoxin]. It functions in the pathway protein modification; protein lipoylation via endogenous pathway; protein N(6)-(lipoyl)lysine from octanoyl-[acyl-carrier-protein]: step 2/2. Its function is as follows. Catalyzes the radical-mediated insertion of two sulfur atoms into the C-6 and C-8 positions of the octanoyl moiety bound to the lipoyl domains of lipoate-dependent enzymes, thereby converting the octanoylated domains into lipoylated derivatives. The polypeptide is Lipoyl synthase (Vibrio campbellii (strain ATCC BAA-1116)).